Consider the following 295-residue polypeptide: Pyrroline-5-carboxylate reductase (295 aa).

This sequence belongs to the pyrroline-5-carboxylate reductase family.

The protein localises to the cytoplasm. It carries out the reaction L-proline + NADP(+) = (S)-1-pyrroline-5-carboxylate + NADPH + 2 H(+). The catalysed reaction is L-proline + NAD(+) = (S)-1-pyrroline-5-carboxylate + NADH + 2 H(+). Its pathway is amino-acid biosynthesis; L-proline biosynthesis; L-proline from L-glutamate 5-semialdehyde: step 1/1. Functionally, catalyzes the reduction of 1-pyrroline-5-carboxylate (PCA) to L-proline. This chain is Pyrroline-5-carboxylate reductase, found in Mycobacterium tuberculosis (strain CDC 1551 / Oshkosh).